A 465-amino-acid chain; its full sequence is Alpha-2A adrenergic receptor (465 aa).

Residues 1–48 lie on the Extracellular side of the membrane; that stretch reads MFRQEQPLAEGSFAPMGSLQPDAGNSSWNGTEAPGGGTRATPYSLQVT. 2 N-linked (GlcNAc...) asparagine glycosylation sites follow: Asn25 and Asn29. Residues 49 to 74 form a helical membrane-spanning segment; it reads LTLVCLAGLLMLFTVFGNVLVIIAVF. Over 75-85 the chain is Cytoplasmic; the sequence is TSRALKAPQNL. Residues 86 to 111 traverse the membrane as a helical segment; sequence FLVSLASADILVATLVIPFSLANEVM. The Extracellular portion of the chain corresponds to 112-121; that stretch reads GYWYFGKVWC. A disulfide bridge links Cys121 with Cys203. Residues 122–144 traverse the membrane as a helical segment; it reads EIYLALDVLFCTSSIVHLCAISL. The Cytoplasmic segment spans residues 145 to 164; the sequence is DRYWSITQAIEYNLKRTPRR. The chain crosses the membrane as a helical span at residues 165–188; sequence IKAIIVTVWVISAVISFPPLISIE. Residues 189-207 are Extracellular-facing; sequence KKGAGGGQQPAEPSCKIND. Residues 208 to 232 form a helical membrane-spanning segment; that stretch reads QKWYVISSSIGSFFAPCLIMILVYV. At 233-389 the chain is on the cytoplasmic side; it reads RIYQIAKRRT…RQNREKRFTF (157 aa). Positions 242-378 are disordered; that stretch reads TRVPPSRRGP…GGGAKASRWR (137 aa). Over residues 313 to 330 the composition is skewed to basic and acidic residues; sequence SSEHAERPPGPRRPDRGP. Ser346 carries the phosphoserine modification. The span at 353 to 363 shows a compositional bias: gly residues; it reads GAAGPGASGSG. An Omega-N-methylarginine modification is found at Arg368. Residues 390–414 form a helical membrane-spanning segment; sequence VLAVVIGVFVVCWFPFFFTYTLIAV. Residues 415-424 lie on the Extracellular side of the membrane; it reads GCPVPSQLFN. A helical membrane pass occupies residues 425–445; that stretch reads FFFWFGYCNSSLNPVIYTIFN. The Cytoplasmic portion of the chain corresponds to 446-465; the sequence is HDFRRAFKKILCRGDRKRIV. Residue Cys457 is the site of S-palmitoyl cysteine attachment.

Belongs to the G-protein coupled receptor 1 family. Adrenergic receptor subfamily. ADRA2A sub-subfamily.

Its subcellular location is the cell membrane. Alpha-2 adrenergic receptors mediate the catecholamine-induced inhibition of adenylate cyclase through the action of G proteins. The chain is Alpha-2A adrenergic receptor from Mus musculus (Mouse).